The sequence spans 130 residues: Large ribosomal subunit protein bL12 (130 aa).

Belongs to the bacterial ribosomal protein bL12 family. In terms of assembly, homodimer. Part of the ribosomal stalk of the 50S ribosomal subunit. Forms a multimeric L10(L12)X complex, where L10 forms an elongated spine to which 2 to 4 L12 dimers bind in a sequential fashion. Binds GTP-bound translation factors.

Its function is as follows. Forms part of the ribosomal stalk which helps the ribosome interact with GTP-bound translation factors. Is thus essential for accurate translation. The sequence is that of Large ribosomal subunit protein bL12 from Parafrankia sp. (strain EAN1pec).